A 527-amino-acid polypeptide reads, in one-letter code: Probable bifunctional tRNA threonylcarbamoyladenosine biosynthesis protein (527 aa).

Residues 1–324 (MIVLGLEGTA…YRIDEVDAPW (324 aa)) form a kae1 region. Residues His-107, His-111, and Tyr-128 each coordinate Fe cation. L-threonylcarbamoyladenylate contacts are provided by residues 128–132 (YVSGG), Asp-160, Gly-173, Glu-177, and Asn-257. Asp-285 is a Fe cation binding site. A Protein kinase domain is found at 330–527 (VKYRDAGAES…EDIRRRHRYV (198 aa)). Residues 333 to 341 (RDAGAESRI) and Lys-354 contribute to the ATP site. Residue Asp-445 is the Proton acceptor; for kinase activity of the active site.

This sequence in the N-terminal section; belongs to the KAE1 / TsaD family. In the C-terminal section; belongs to the protein kinase superfamily. Tyr protein kinase family. BUD32 subfamily. As to quaternary structure, component of the KEOPS complex that consists of Kae1, Bud32, Cgi121 and Pcc1; the whole complex dimerizes. Fe(2+) is required as a cofactor.

Its subcellular location is the cytoplasm. The enzyme catalyses L-seryl-[protein] + ATP = O-phospho-L-seryl-[protein] + ADP + H(+). The catalysed reaction is L-threonyl-[protein] + ATP = O-phospho-L-threonyl-[protein] + ADP + H(+). It catalyses the reaction L-threonylcarbamoyladenylate + adenosine(37) in tRNA = N(6)-L-threonylcarbamoyladenosine(37) in tRNA + AMP + H(+). In terms of biological role, required for the formation of a threonylcarbamoyl group on adenosine at position 37 (t(6)A37) in tRNAs that read codons beginning with adenine. Is a component of the KEOPS complex that is probably involved in the transfer of the threonylcarbamoyl moiety of threonylcarbamoyl-AMP (TC-AMP) to the N6 group of A37. The Kae1 domain likely plays a direct catalytic role in this reaction. The Bud32 domain probably displays kinase activity that regulates Kae1 function. This Thermoplasma volcanium (strain ATCC 51530 / DSM 4299 / JCM 9571 / NBRC 15438 / GSS1) protein is Probable bifunctional tRNA threonylcarbamoyladenosine biosynthesis protein.